The chain runs to 103 residues: Large ribosomal subunit protein bL21 (103 aa).

The protein belongs to the bacterial ribosomal protein bL21 family. In terms of assembly, part of the 50S ribosomal subunit. Contacts protein L20.

This protein binds to 23S rRNA in the presence of protein L20. The sequence is that of Large ribosomal subunit protein bL21 from Lactobacillus helveticus (strain DPC 4571).